The chain runs to 469 residues: A-type ATP synthase subunit B 3 (469 aa).

The protein belongs to the ATPase alpha/beta chains family. As to quaternary structure, has multiple subunits with at least A(3), B(3), C, D, E, F, H, I and proteolipid K(x).

It is found in the cell membrane. Functionally, component of the A-type ATP synthase that produces ATP from ADP in the presence of a proton gradient across the membrane. The B chain is a regulatory subunit. The chain is A-type ATP synthase subunit B 3 from Methanospirillum hungatei JF-1 (strain ATCC 27890 / DSM 864 / NBRC 100397 / JF-1).